Consider the following 533-residue polypeptide: Probable lipid II flippase MurJ (533 aa).

Transmembrane regions (helical) follow at residues 11–31 (LANI…FGLL), 39–61 (AFGV…FLFI), 96–116 (LVSG…GIFI), 135–155 (LQIM…FGTL), 166–186 (ISPL…VWQL), 196–216 (WLLG…LQWL), 253–273 (LSSG…SFIP), 284–304 (FVAL…FLPV), 330–350 (LTMF…VQVI), 360–380 (AAAE…FYLG), 400–420 (VSLF…KPFG), 422–442 (VGIV…FIWM), 452–472 (LGGW…ASVA), and 493–513 (ILEV…GVAL).

The protein belongs to the MurJ/MviN family.

Its subcellular location is the cell inner membrane. Its pathway is cell wall biogenesis; peptidoglycan biosynthesis. Involved in peptidoglycan biosynthesis. Transports lipid-linked peptidoglycan precursors from the inner to the outer leaflet of the cytoplasmic membrane. In Synechocystis sp. (strain ATCC 27184 / PCC 6803 / Kazusa), this protein is Probable lipid II flippase MurJ.